Consider the following 104-residue polypeptide: L-rhamnose mutarotase (104 aa).

Tyrosine 18 is a binding site for substrate. Histidine 22 acts as the Proton donor in catalysis. Residues tyrosine 41 and 76 to 77 contribute to the substrate site; that span reads WW.

It belongs to the rhamnose mutarotase family. As to quaternary structure, homodimer.

It is found in the cytoplasm. It catalyses the reaction alpha-L-rhamnose = beta-L-rhamnose. Its pathway is carbohydrate metabolism; L-rhamnose metabolism. Functionally, involved in the anomeric conversion of L-rhamnose. This Listeria monocytogenes serovar 1/2a (strain ATCC BAA-679 / EGD-e) protein is L-rhamnose mutarotase.